Consider the following 251-residue polypeptide: MTKTEKKLRHYITKAIADYKLLDKGDKVMLCLSGGKDSFGLLKVLHGLIEDKTYDIDLHVYTLDQSQPGWDDSQLRKYLDDLGVSYEIETKNTYGVIIDKVPEGKTYCSLCSRLRRGNIYRYAKEHKMDKIILGHHRDDLIQSLLMSILYQGQIKSMPPKFVTQDGENTVIRPMVLVQERDLIEFAKEENFPIIPCNLCGSQENLKRKKVKKLIQDLALENPKVPSNILNSLSNVLPSHLMDKNLLNSLEN.

The PP-loop motif signature appears at 33–38 (SGGKDS). Residues cysteine 108, cysteine 111, and cysteine 199 each contribute to the [4Fe-4S] cluster site.

It belongs to the TtcA family. As to quaternary structure, homodimer. The cofactor is Mg(2+). [4Fe-4S] cluster is required as a cofactor.

Its subcellular location is the cytoplasm. The enzyme catalyses cytidine(32) in tRNA + S-sulfanyl-L-cysteinyl-[cysteine desulfurase] + AH2 + ATP = 2-thiocytidine(32) in tRNA + L-cysteinyl-[cysteine desulfurase] + A + AMP + diphosphate + H(+). Its pathway is tRNA modification. In terms of biological role, catalyzes the ATP-dependent 2-thiolation of cytidine in position 32 of tRNA, to form 2-thiocytidine (s(2)C32). The sulfur atoms are provided by the cysteine/cysteine desulfurase (IscS) system. This Francisella tularensis subsp. tularensis (strain FSC 198) protein is tRNA-cytidine(32) 2-sulfurtransferase 2.